A 494-amino-acid chain; its full sequence is UPF0371 protein SPJ_0333 (494 aa).

The protein belongs to the UPF0371 family.

The sequence is that of UPF0371 protein SPJ_0333 from Streptococcus pneumoniae (strain JJA).